The chain runs to 345 residues: GTPase Obg (345 aa).

The Obg domain occupies 1–159; that stretch reads MHFLDQAKIF…MWVWLRLKLL (159 aa). The disordered stretch occupies residues 121–142; that stretch reads GDGGRGNASYKTSTNRAPRQHG. The OBG-type G domain occupies 160–327; the sequence is ADCGLVGLPN…VLDKIIEILG (168 aa). GTP contacts are provided by residues 166-173, 191-195, 212-215, 279-282, and 308-310; these read GLPNAGKS, FTTIR, DIPG, NKID, and SGA. Mg(2+)-binding residues include S173 and T193.

The protein belongs to the TRAFAC class OBG-HflX-like GTPase superfamily. OBG GTPase family. In terms of assembly, monomer. Mg(2+) serves as cofactor.

The protein resides in the cytoplasm. Its function is as follows. An essential GTPase which binds GTP, GDP and possibly (p)ppGpp with moderate affinity, with high nucleotide exchange rates and a fairly low GTP hydrolysis rate. Plays a role in control of the cell cycle, stress response, ribosome biogenesis and in those bacteria that undergo differentiation, in morphogenesis control. The polypeptide is GTPase Obg (Rhizorhabdus wittichii (strain DSM 6014 / CCUG 31198 / JCM 15750 / NBRC 105917 / EY 4224 / RW1) (Sphingomonas wittichii)).